We begin with the raw amino-acid sequence, 724 residues long: Long-chain-fatty-acid--CoA ligase ACSBG1 (724 aa).

The interval 1-30 is disordered; sequence MPRNSGAGYGCPHGDPSMLDSRETPQESRQ. Residues 20-30 are compositionally biased toward basic and acidic residues; sequence DSRETPQESRQ. A phosphoserine mark is found at serine 53 and serine 56. Residues 282 to 290, 472 to 477, aspartate 550, and arginine 565 each bind ATP; these read TSGTTGNPK and AGYGLS. Residue tyrosine 658 is modified to Phosphotyrosine. Lysine 701 is an ATP binding site.

This sequence belongs to the ATP-dependent AMP-binding enzyme family. Bubblegum subfamily. As to expression, expressed primarily in brain. Expressed at lower level in testis and adrenal gland. Present in all regions of brain except pituitary.

It localises to the cytoplasm. The protein resides in the cytoplasmic vesicle. It is found in the microsome. The protein localises to the endoplasmic reticulum. Its subcellular location is the cell membrane. The enzyme catalyses a long-chain fatty acid + ATP + CoA = a long-chain fatty acyl-CoA + AMP + diphosphate. It catalyses the reaction (E)-hexadec-2-enoate + ATP + CoA = (2E)-hexadecenoyl-CoA + AMP + diphosphate. It carries out the reaction hexadecanoate + ATP + CoA = hexadecanoyl-CoA + AMP + diphosphate. Its function is as follows. Catalyzes the conversion of fatty acids such as long-chain and very long-chain fatty acids to their active form acyl-CoAs for both synthesis of cellular lipids, and degradation via beta-oxidation. Can activate diverse saturated, monosaturated and polyunsaturated fatty acids. This is Long-chain-fatty-acid--CoA ligase ACSBG1 from Homo sapiens (Human).